Reading from the N-terminus, the 207-residue chain is Large ribosomal subunit protein uL4 (207 aa).

Positions 44–81 are disordered; the sequence is KRQGTQSAKTRSEVRGGGRKPWRQKGTGRARQGSIRSP. Residues 60-71 are compositionally biased toward basic residues; sequence GGRKPWRQKGTG.

It belongs to the universal ribosomal protein uL4 family. Part of the 50S ribosomal subunit.

In terms of biological role, one of the primary rRNA binding proteins, this protein initially binds near the 5'-end of the 23S rRNA. It is important during the early stages of 50S assembly. It makes multiple contacts with different domains of the 23S rRNA in the assembled 50S subunit and ribosome. Functionally, forms part of the polypeptide exit tunnel. This chain is Large ribosomal subunit protein uL4, found in Finegoldia magna (strain ATCC 29328 / DSM 20472 / WAL 2508) (Peptostreptococcus magnus).